Reading from the N-terminus, the 268-residue chain is 3-methyl-2-oxobutanoate hydroxymethyltransferase (268 aa).

Residues Asp44 and Asp83 each coordinate Mg(2+). 3-methyl-2-oxobutanoate-binding positions include 44-45 (DS), Asp83, and Lys113. Glu115 contributes to the Mg(2+) binding site. Glu183 acts as the Proton acceptor in catalysis.

The protein belongs to the PanB family. Homodecamer; pentamer of dimers. Mg(2+) serves as cofactor.

The protein resides in the cytoplasm. The enzyme catalyses 3-methyl-2-oxobutanoate + (6R)-5,10-methylene-5,6,7,8-tetrahydrofolate + H2O = 2-dehydropantoate + (6S)-5,6,7,8-tetrahydrofolate. It functions in the pathway cofactor biosynthesis; (R)-pantothenate biosynthesis; (R)-pantoate from 3-methyl-2-oxobutanoate: step 1/2. Its function is as follows. Catalyzes the reversible reaction in which hydroxymethyl group from 5,10-methylenetetrahydrofolate is transferred onto alpha-ketoisovalerate to form ketopantoate. This chain is 3-methyl-2-oxobutanoate hydroxymethyltransferase, found in Leptospira biflexa serovar Patoc (strain Patoc 1 / Ames).